A 550-amino-acid polypeptide reads, in one-letter code: Formate--tetrahydrofolate ligase (550 aa).

60–67 (TPFGEGKT) contacts ATP.

The protein belongs to the formate--tetrahydrofolate ligase family.

It carries out the reaction (6S)-5,6,7,8-tetrahydrofolate + formate + ATP = (6R)-10-formyltetrahydrofolate + ADP + phosphate. It functions in the pathway one-carbon metabolism; tetrahydrofolate interconversion. In Campylobacter curvus (strain 525.92), this protein is Formate--tetrahydrofolate ligase.